Reading from the N-terminus, the 241-residue chain is UPF0173 metal-dependent hydrolase Haur_4333 (241 aa).

It belongs to the UPF0173 family.

The sequence is that of UPF0173 metal-dependent hydrolase Haur_4333 from Herpetosiphon aurantiacus (strain ATCC 23779 / DSM 785 / 114-95).